An 807-amino-acid polypeptide reads, in one-letter code: Spondin-1 (807 aa).

An N-terminal signal peptide occupies residues 1 to 28 (MRLSPAPLRLSRGPALLALALPLAAALA). One can recognise a Reelin domain in the interval 29–194 (FSDETLDKVA…DPTLDGVTDR (166 aa)). 17 cysteine pairs are disulfide-bonded: cysteine 44–cysteine 128, cysteine 156–cysteine 182, cysteine 199–cysteine 336, cysteine 200–cysteine 340, cysteine 202–cysteine 415, cysteine 443–cysteine 480, cysteine 454–cysteine 489, cysteine 459–cysteine 494, cysteine 502–cysteine 538, cysteine 513–cysteine 517, cysteine 548–cysteine 554, cysteine 559–cysteine 595, cysteine 570–cysteine 574, cysteine 605–cysteine 610, cysteine 615–cysteine 650, cysteine 626–cysteine 630, and cysteine 660–cysteine 665. The Spondin domain occupies 195 to 388 (PILDCCACGT…LTSLDHPQSP (194 aa)). Asparagine 214 carries N-linked (GlcNAc...) asparagine glycosylation. Aspartate 325, aspartate 354, and aspartate 358 together coordinate Ca(2+). TSP type-1 domains follow at residues 442 to 495 (TCIY…PGCS), 501 to 555 (TCTM…EECS), 558 to 611 (SCLV…PECH), 614 to 666 (PCLL…PECP), and 668 to 721 (DCEL…RKCL). Asparagine 681 is a glycosylation site (N-linked (GlcNAc...) asparagine). Over residues 732–746 (REARESRRSEQLREE) the composition is skewed to basic and acidic residues. The tract at residues 732-752 (REARESRRSEQLREESDGEQF) is disordered. The 53-residue stretch at 754–806 (GCRMRPWTAWSECTKLCGGGIQERYMTVKKRFKSSQFTSCKDKKEIRACNVHP) folds into the TSP type-1 6 domain.

Binds to the central extracellular domain of APP and inhibits beta-secretase cleavage of APP. Expressed at high levels in the floor plate.

The protein localises to the secreted. It localises to the extracellular space. Its subcellular location is the extracellular matrix. In terms of biological role, cell adhesion protein that promotes the attachment of spinal cord and sensory neuron cells and the outgrowth of neurites in vitro. May contribute to the growth and guidance of axons in both the spinal cord and the PNS. The chain is Spondin-1 (Spon1) from Rattus norvegicus (Rat).